The following is a 77-amino-acid chain: Acyl carrier protein (77 aa).

The region spanning serine 2–threonine 77 is the Carrier domain. Serine 37 carries the O-(pantetheine 4'-phosphoryl)serine modification.

The protein belongs to the acyl carrier protein (ACP) family. Post-translationally, 4'-phosphopantetheine is transferred from CoA to a specific serine of apo-ACP by AcpS. This modification is essential for activity because fatty acids are bound in thioester linkage to the sulfhydryl of the prosthetic group.

Its subcellular location is the cytoplasm. The protein operates within lipid metabolism; fatty acid biosynthesis. Carrier of the growing fatty acid chain in fatty acid biosynthesis. This is Acyl carrier protein from Trichlorobacter lovleyi (strain ATCC BAA-1151 / DSM 17278 / SZ) (Geobacter lovleyi).